We begin with the raw amino-acid sequence, 268 residues long: Tryptophan synthase alpha chain (268 aa).

Residues Glu-49 and Asp-60 each act as proton acceptor in the active site.

The protein belongs to the TrpA family. Tetramer of two alpha and two beta chains.

The enzyme catalyses (1S,2R)-1-C-(indol-3-yl)glycerol 3-phosphate + L-serine = D-glyceraldehyde 3-phosphate + L-tryptophan + H2O. Its pathway is amino-acid biosynthesis; L-tryptophan biosynthesis; L-tryptophan from chorismate: step 5/5. Functionally, the alpha subunit is responsible for the aldol cleavage of indoleglycerol phosphate to indole and glyceraldehyde 3-phosphate. The polypeptide is Tryptophan synthase alpha chain (Xylella fastidiosa (strain M23)).